Consider the following 86-residue polypeptide: MeuNaTxbeta-1 (86 aa).

A signal peptide spans 1 to 20 (MMKIIIFLIVSSLVLIGVKT). The region spanning 21 to 83 (DNGYLLDKYT…LWHYETNKCN (63 aa)) is the LCN-type CS-alpha/beta domain. 4 cysteine pairs are disulfide-bonded: Cys-32-Cys-82, Cys-36-Cys-57, Cys-43-Cys-64, and Cys-47-Cys-66.

As to expression, expressed by the venom gland.

Its subcellular location is the secreted. In terms of biological role, inhibits sodium channels (Nav). Also moderately inhibits human calcium-activated potassium channel KCa1.1/KCNMA1/BK (41.9% decrease at 2 uM toxin concentration). Shows moderate antimicrobial activity against both Gram-positive and -negative bacteria. This chain is MeuNaTxbeta-1, found in Mesobuthus eupeus (Lesser Asian scorpion).